The chain runs to 433 residues: Myricetin 3-O-glucosyl 1,2-rhamnoside 6'-O-caffeoyltransferase AT2 (433 aa).

Active-site proton acceptor residues include His-157 and Asp-375.

This sequence belongs to the plant acyltransferase family. In terms of tissue distribution, expressed in young cromes.

The catalysed reaction is myricetin 3-O-[beta-D-glucosyl-(1-&gt;2)-alpha-L-rhamnoside] + (E)-caffeoyl-CoA = myricetin 3-O-[(6-O-(E)-caffeoyl-beta-D-glucosyl)-(1-&gt;2)-alpha-L-rhamnoside] + CoA. It participates in flavonoid metabolism. Its function is as follows. Caffeoyltransferase involved in montbretin A (MbA) biosynthesis. Catalyzes the caffeoylation of myricetin 3-O-beta-D-glucosyl 1,2-alpha-L-rhamnoside (MRG) to produce myricetin 3-O-(6'-O-caffeoyl)-beta-D-glucosyl 1,2-alpha-L-rhamnoside (mini-MbA), a precursor of MbA. Mini-MbA and MbA are potent inhibitors of human pancreatic alpha-amylase and are being developed as drug candidates to treat type-2 diabetes. In vitro, is able to catalyze the caffeoylation of quercetin 3-O-sophoroside (QGG), although QGG may not be a physiological substrate in vivo. In vitro, can use coumaryl-CoA, feruloyl-CoA and acetyl-CoA, although these three acyl donors may not be physiological in vivo. This chain is Myricetin 3-O-glucosyl 1,2-rhamnoside 6'-O-caffeoyltransferase AT2, found in Crocosmia x crocosmiiflora (Montbretia).